We begin with the raw amino-acid sequence, 459 residues long: Bifunctional protein GlmU (459 aa).

Residues 1-230 are pyrophosphorylase; that stretch reads MSNRFAVILA…FDETLGVNDR (230 aa). UDP-N-acetyl-alpha-D-glucosamine contacts are provided by residues 9–12, Lys-23, Gln-73, and 78–79; these read LAAG and GT. Residue Asp-103 participates in Mg(2+) binding. UDP-N-acetyl-alpha-D-glucosamine is bound by residues Gly-140, Glu-155, Asn-170, and Asn-228. Asn-228 is a binding site for Mg(2+). The tract at residues 231 to 251 is linker; sequence VALSQAEIIMKNRINRKNMVN. Residues 252-459 are N-acetyltransferase; it reads GVTIIDPSNT…VDQLLNKKKS (208 aa). Arg-333 and Lys-351 together coordinate UDP-N-acetyl-alpha-D-glucosamine. Residue His-363 is the Proton acceptor of the active site. UDP-N-acetyl-alpha-D-glucosamine contacts are provided by Tyr-366 and Asn-377. Acetyl-CoA contacts are provided by residues 386–387, Ala-423, and Arg-440; that span reads NY.

It in the N-terminal section; belongs to the N-acetylglucosamine-1-phosphate uridyltransferase family. The protein in the C-terminal section; belongs to the transferase hexapeptide repeat family. In terms of assembly, homotrimer. It depends on Mg(2+) as a cofactor.

It is found in the cytoplasm. It catalyses the reaction alpha-D-glucosamine 1-phosphate + acetyl-CoA = N-acetyl-alpha-D-glucosamine 1-phosphate + CoA + H(+). It carries out the reaction N-acetyl-alpha-D-glucosamine 1-phosphate + UTP + H(+) = UDP-N-acetyl-alpha-D-glucosamine + diphosphate. It participates in nucleotide-sugar biosynthesis; UDP-N-acetyl-alpha-D-glucosamine biosynthesis; N-acetyl-alpha-D-glucosamine 1-phosphate from alpha-D-glucosamine 6-phosphate (route II): step 2/2. Its pathway is nucleotide-sugar biosynthesis; UDP-N-acetyl-alpha-D-glucosamine biosynthesis; UDP-N-acetyl-alpha-D-glucosamine from N-acetyl-alpha-D-glucosamine 1-phosphate: step 1/1. It functions in the pathway bacterial outer membrane biogenesis; LPS lipid A biosynthesis. Catalyzes the last two sequential reactions in the de novo biosynthetic pathway for UDP-N-acetylglucosamine (UDP-GlcNAc). The C-terminal domain catalyzes the transfer of acetyl group from acetyl coenzyme A to glucosamine-1-phosphate (GlcN-1-P) to produce N-acetylglucosamine-1-phosphate (GlcNAc-1-P), which is converted into UDP-GlcNAc by the transfer of uridine 5-monophosphate (from uridine 5-triphosphate), a reaction catalyzed by the N-terminal domain. In Bacillus mycoides (strain KBAB4) (Bacillus weihenstephanensis), this protein is Bifunctional protein GlmU.